The following is a 547-amino-acid chain: Probable hydroxyacid-oxoacid transhydrogenase, mitochondrial (547 aa).

Belongs to the iron-containing alcohol dehydrogenase family. Hydroxyacid-oxoacid transhydrogenase subfamily.

It localises to the mitochondrion. It catalyses the reaction (S)-3-hydroxybutanoate + 2-oxoglutarate = (R)-2-hydroxyglutarate + acetoacetate. It carries out the reaction 4-hydroxybutanoate + 2-oxoglutarate = (R)-2-hydroxyglutarate + succinate semialdehyde. Catalyzes the cofactor-independent reversible oxidation of gamma-hydroxybutyrate (GHB) to succinic semialdehyde (SSA) coupled to reduction of 2-ketoglutarate (2-KG) to D-2-hydroxyglutarate (D-2-HG). L-3-hydroxybutyrate (L-3-OHB) is also a substrate for HOT when using 2-KG as hydrogen acceptor, resulting in the formation of D-2-HG. The chain is Probable hydroxyacid-oxoacid transhydrogenase, mitochondrial (adhfe1) from Dictyostelium discoideum (Social amoeba).